We begin with the raw amino-acid sequence, 84 residues long: Dolichol phosphate-mannose biosynthesis regulatory protein (84 aa).

2 helical membrane-spanning segments follow: residues 11–31 and 49–69; these read LGLVALSLIIFTYYTAWVILL and YAIAIPLAAGHLLLLFVGIFI.

Belongs to the DPM2 family. Component of the dolichol-phosphate mannose (DPM) synthase complex composed of DPM1, DPM2 and DPM3; in the complex interacts directly with DPM3. Component of the glycosylphosphatidylinositol-N-acetylglucosaminyltransferase (GPI-GnT) complex composed at least by PIGA, PIGC, PIGH, PIGP, PIGQ, PIGY and DPM2. Interacts with PIGA, PIGC and PIGQ.

It is found in the endoplasmic reticulum membrane. Its pathway is protein modification; protein glycosylation. In terms of biological role, regulates the biosynthesis of dolichol phosphate-mannose. Regulatory subunit of the dolichol-phosphate mannose (DPM) synthase complex; essential for the ER localization and stable expression of DPM1. Part of the glycosylphosphatidylinositol-N-acetylglucosaminyltransferase (GPI-GnT) complex that catalyzes the transfer of N-acetylglucosamine from UDP-N-acetylglucosamine to phosphatidylinositol and participates in the first step of GPI biosynthesis. May act by regulating the GPI-GNT complex. The sequence is that of Dolichol phosphate-mannose biosynthesis regulatory protein from Bos taurus (Bovine).